The primary structure comprises 372 residues: MHC class I-like protein MILL2 (372 aa).

The first 26 residues, 1-26 (MEASSGTAGPAVLLLILALLLTESQG), serve as a signal peptide directing secretion. Positions 28–119 (RSQGTHTLRY…MINQKGHDKG (92 aa)) are alpha-1. Cystine bridges form between cysteine 78-cysteine 89, cysteine 129-cysteine 191, and cysteine 230-cysteine 287. Positions 120–210 (PYTLQATLDC…SLSNVLPDTG (91 aa)) are alpha-2. N-linked (GlcNAc...) asparagine glycosylation is found at asparagine 134, asparagine 234, and asparagine 293. The 111-residue stretch at 192–302 (PARLQRHLAS…NRTIMQTAVS (111 aa)) folds into the Ig-like C1-type domain. The alpha-3 stretch occupies residues 211 to 339 (SPVVIVTCRN…VVDGGLVTGN (129 aa)). The interval 308–349 (WPSASWATRQEAEGPHRTHNDHVVDGGLVTGNANKDSPDASS) is disordered. Over residues 317 to 331 (QEAEGPHRTHNDHVV) the composition is skewed to basic and acidic residues. The tract at residues 340–348 (ANKDSPDAS) is connecting peptide. Serine 349 is lipidated: GPI-anchor amidated serine. Positions 350-372 (CATASAISAFPVVVLSVALPRAN) are cleaved as a propeptide — removed in mature form.

The protein belongs to the MHC class I family. As to quaternary structure, heterodimer with B2M. Ubiquitously expressed in neonatal and adult tissues.

The protein localises to the cell membrane. In terms of biological role, binds to heparan sulfate proteoglycans on the surface of fibroblast cells. In Rattus norvegicus (Rat), this protein is MHC class I-like protein MILL2.